A 128-amino-acid chain; its full sequence is Small ribosomal subunit protein uS11 (128 aa).

Belongs to the universal ribosomal protein uS11 family. Part of the 30S ribosomal subunit. Interacts with proteins S7 and S18. Binds to IF-3.

In terms of biological role, located on the platform of the 30S subunit, it bridges several disparate RNA helices of the 16S rRNA. Forms part of the Shine-Dalgarno cleft in the 70S ribosome. This is Small ribosomal subunit protein uS11 from Leuconostoc mesenteroides subsp. mesenteroides (strain ATCC 8293 / DSM 20343 / BCRC 11652 / CCM 1803 / JCM 6124 / NCDO 523 / NBRC 100496 / NCIMB 8023 / NCTC 12954 / NRRL B-1118 / 37Y).